A 197-amino-acid chain; its full sequence is Imidazoleglycerol-phosphate dehydratase (197 aa).

The protein belongs to the imidazoleglycerol-phosphate dehydratase family.

The protein resides in the cytoplasm. The catalysed reaction is D-erythro-1-(imidazol-4-yl)glycerol 3-phosphate = 3-(imidazol-4-yl)-2-oxopropyl phosphate + H2O. Its pathway is amino-acid biosynthesis; L-histidine biosynthesis; L-histidine from 5-phospho-alpha-D-ribose 1-diphosphate: step 6/9. The polypeptide is Imidazoleglycerol-phosphate dehydratase (Halorhodospira halophila (strain DSM 244 / SL1) (Ectothiorhodospira halophila (strain DSM 244 / SL1))).